We begin with the raw amino-acid sequence, 165 residues long: Phosphopantetheine adenylyltransferase (165 aa).

Ser-10 is a binding site for substrate. Residues 10–11 (SF) and His-18 contribute to the ATP site. Lys-42, Leu-74, and Arg-88 together coordinate substrate. ATP is bound by residues 89 to 91 (GLR), Glu-99, and 124 to 130 (YSFLSSS).

This sequence belongs to the bacterial CoaD family. As to quaternary structure, homohexamer. Mg(2+) serves as cofactor.

The protein resides in the cytoplasm. It carries out the reaction (R)-4'-phosphopantetheine + ATP + H(+) = 3'-dephospho-CoA + diphosphate. It participates in cofactor biosynthesis; coenzyme A biosynthesis; CoA from (R)-pantothenate: step 4/5. Its function is as follows. Reversibly transfers an adenylyl group from ATP to 4'-phosphopantetheine, yielding dephospho-CoA (dPCoA) and pyrophosphate. This Anoxybacillus flavithermus (strain DSM 21510 / WK1) protein is Phosphopantetheine adenylyltransferase.